The sequence spans 1044 residues: Pre-mRNA-splicing factor ATP-dependent RNA helicase DHX16 (1044 aa).

Disordered stretches follow at residues 101-210 and 374-394; these read EDSE…AYEE and LQGN…QKES. Serine 103, serine 106, and serine 107 each carry phosphoserine. The segment covering 119-130 has biased composition (basic residues); sequence QKKRKKRKHLRK. The segment covering 134–143 has biased composition (acidic residues); that stretch reads EEEEEEEEEA. The residue at position 163 (serine 163) is a Phosphoserine. Residues 169 to 210 show a composition bias toward basic and acidic residues; sequence RTERERLQDLEERDAFAERVRQRDKDRTRNVLERSDKKAYEE. The region spanning 412–576 is the Helicase ATP-binding domain; that stretch reads LAAIANHQVL…FDDAPVFRIP (165 aa). Residue 425-432 coordinates ATP; it reads GETGSGKT. The DEAH box signature appears at 523-526; it reads DEAH. One can recognise a Helicase C-terminal domain in the interval 601–774; that stretch reads SVLQIHVTQP…NVVLLLKSLG (174 aa). Position 715 is a phosphothreonine (threonine 715).

The protein belongs to the DEAD box helicase family. DEAH subfamily. DDX16/PRP8 sub-subfamily. Component of pre-catalytic spliceosome complexes. Component of the minor spliceosome, which splices U12-type introns. Interacts with GPKOW. Interacts with TRIM6. Interacts with RIGI.

It localises to the nucleus. The protein resides in the nucleoplasm. Its subcellular location is the cytoplasm. The catalysed reaction is ATP + H2O = ADP + phosphate + H(+). Required for pre-mRNA splicing as a component of the spliceosome. Contributes to pre-mRNA splicing after spliceosome formation and prior to the first transesterification reaction. As a component of the minor spliceosome, involved in the splicing of U12-type introns in pre-mRNAs. Also plays a role in innate antiviral response by acting as a pattern recognition receptor sensing splicing signals in viral RNA. Mechanistically, TRIM6 promotes the interaction between unanchored 'Lys-48'-polyubiquitin chains and DHX16, leading to DHX16 interaction with RIGI and ssRNA to amplify RIGI-dependent innate antiviral immune responses. The protein is Pre-mRNA-splicing factor ATP-dependent RNA helicase DHX16 (DHX16) of Pan troglodytes (Chimpanzee).